Here is a 199-residue protein sequence, read N- to C-terminus: N-(5'-phosphoribosyl)anthranilate isomerase (199 aa).

Belongs to the TrpF family.

The catalysed reaction is N-(5-phospho-beta-D-ribosyl)anthranilate = 1-(2-carboxyphenylamino)-1-deoxy-D-ribulose 5-phosphate. Its pathway is amino-acid biosynthesis; L-tryptophan biosynthesis; L-tryptophan from chorismate: step 3/5. This Solibacter usitatus (strain Ellin6076) protein is N-(5'-phosphoribosyl)anthranilate isomerase.